The following is a 191-amino-acid chain: Outer membrane lipoprotein DolP (191 aa).

Positions Met1–Gly18 are cleaved as a signal peptide. Cys19 carries the N-palmitoyl cysteine lipid modification. The S-diacylglycerol cysteine moiety is linked to residue Cys19. BON domains lie at Asp46–Gln115 and Asn124–Lys191.

The protein belongs to the lipoprotein DolP family.

The protein resides in the cell outer membrane. Plays an important role in maintaining outer membrane integrity. Contributes to virulence. The sequence is that of Outer membrane lipoprotein DolP from Salmonella typhimurium (strain LT2 / SGSC1412 / ATCC 700720).